An 861-amino-acid polypeptide reads, in one-letter code: Leucine--tRNA ligase (861 aa).

A 'HIGH' region motif is present at residues 42–52 (PYPSGRLHMGH). A 'KMSKS' region motif is present at residues 619–623 (KMSKS). Lys-622 lines the ATP pocket.

Belongs to the class-I aminoacyl-tRNA synthetase family.

It is found in the cytoplasm. It catalyses the reaction tRNA(Leu) + L-leucine + ATP = L-leucyl-tRNA(Leu) + AMP + diphosphate. This is Leucine--tRNA ligase from Haemophilus ducreyi (strain 35000HP / ATCC 700724).